The chain runs to 161 residues: S-ribosylhomocysteine lyase (161 aa).

Fe cation contacts are provided by His-57, His-61, and Cys-127.

The protein belongs to the LuxS family. Homodimer. Requires Fe cation as cofactor.

The enzyme catalyses S-(5-deoxy-D-ribos-5-yl)-L-homocysteine = (S)-4,5-dihydroxypentane-2,3-dione + L-homocysteine. Functionally, involved in the synthesis of autoinducer 2 (AI-2) which is secreted by bacteria and is used to communicate both the cell density and the metabolic potential of the environment. The regulation of gene expression in response to changes in cell density is called quorum sensing. Catalyzes the transformation of S-ribosylhomocysteine (RHC) to homocysteine (HC) and 4,5-dihydroxy-2,3-pentadione (DPD). This is S-ribosylhomocysteine lyase from Streptococcus equi subsp. zooepidemicus (strain H70).